A 208-amino-acid chain; its full sequence is Uracil phosphoribosyltransferase (208 aa).

Residues Arg78, Arg103, and 130–138 (DPMLATGGS) contribute to the 5-phospho-alpha-D-ribose 1-diphosphate site. Uracil-binding positions include Ile193 and 198-200 (GDA). Asp199 lines the 5-phospho-alpha-D-ribose 1-diphosphate pocket.

The protein belongs to the UPRTase family. It depends on Mg(2+) as a cofactor.

It carries out the reaction UMP + diphosphate = 5-phospho-alpha-D-ribose 1-diphosphate + uracil. It participates in pyrimidine metabolism; UMP biosynthesis via salvage pathway; UMP from uracil: step 1/1. With respect to regulation, allosterically activated by GTP. Functionally, catalyzes the conversion of uracil and 5-phospho-alpha-D-ribose 1-diphosphate (PRPP) to UMP and diphosphate. This Wolinella succinogenes (strain ATCC 29543 / DSM 1740 / CCUG 13145 / JCM 31913 / LMG 7466 / NCTC 11488 / FDC 602W) (Vibrio succinogenes) protein is Uracil phosphoribosyltransferase.